The sequence spans 445 residues: MAKYKVGMVSLGCDKNRVDSEIMLGMVQNEYELTNNPKEADIIIVNTCGFIEKAKQESINTILDMAKYKTSHNCKLLIATGCLTQRYGDELLELMPEIDIMLGVNDYAKINEAIMNFINGNNEKVKATNYSDVSINEGLRLITTDKATAYLRIAEGCDNFCTYCIIPKIRGKFRSRALESIVEEAKKLAENGVKELILIAQDTTNYGIDIYGEKKLHLVLRELAKIEGIEWIRVLYCYPEAIYDELIKEISVNDKVCNYLDLPIQHISNNVLKRMGRKTTKEEIIGKINDLRKNVPNIVLRTSLIVGFPGESCEDFNELKDFIKTIKLDKVGVFTYSREEGTPAAIMEDQIDEEVKKAREEEIMLLQKEVSEEINKNKVGREYDVLIEKFNGEYYIGRSYEMAPDIDGCIYVKGNGAKKDQFCKVKIEKALEYDLVGVVCNESCK.

The region spanning 4–119 (YKVGMVSLGC…INEAIMNFIN (116 aa)) is the MTTase N-terminal domain. The [4Fe-4S] cluster site is built by Cys-13, Cys-48, Cys-82, Cys-157, Cys-161, and Cys-164. Residues 143–373 (TTDKATAYLR…MLLQKEVSEE (231 aa)) form the Radical SAM core domain. Positions 376–441 (KNKVGREYDV…EYDLVGVVCN (66 aa)) constitute a TRAM domain.

The protein belongs to the methylthiotransferase family. RimO subfamily. The cofactor is [4Fe-4S] cluster.

It is found in the cytoplasm. It carries out the reaction L-aspartate(89)-[ribosomal protein uS12]-hydrogen + (sulfur carrier)-SH + AH2 + 2 S-adenosyl-L-methionine = 3-methylsulfanyl-L-aspartate(89)-[ribosomal protein uS12]-hydrogen + (sulfur carrier)-H + 5'-deoxyadenosine + L-methionine + A + S-adenosyl-L-homocysteine + 2 H(+). Functionally, catalyzes the methylthiolation of an aspartic acid residue of ribosomal protein uS12. This Clostridium perfringens (strain 13 / Type A) protein is Ribosomal protein uS12 methylthiotransferase RimO.